A 1020-amino-acid chain; its full sequence is Protein SCAR3 (1020 aa).

Disordered regions lie at residues 167-198 (NLSQ…DMSR), 351-382 (DEKP…LRKR), and 802-827 (DYLS…GRKE). Basic residues predominate over residues 174 to 191 (KFQKDKKHCKMKKKKTSS). Positions 365 to 382 (FHSKDNENDKSESGLRKR) are enriched in basic and acidic residues. Residues 802-814 (DYLSDNHSLSNSE) show a composition bias toward polar residues. In terms of domain architecture, WH2 spans 954 to 972 (ETGDFLQQIRTQQFNLRPV).

Belongs to the SCAR/WAVE family. In terms of assembly, binds BRK1. Interacts with SPK1, ABI1, ABI2, ABI3 and ABI4. In terms of tissue distribution, expressed in expanding cotyledons, expanding leaves and expanding siliques containing developing embryos. Detected in unopened flower buds. Reduced expression in mature leaves and mature cotyledons.

Its subcellular location is the cytoplasm. It localises to the cytoskeleton. Involved in regulation of actin and microtubule organization. Part of a WAVE complex that activates the Arp2/3 complex. Regulates trichome branch positioning and expansion. This is Protein SCAR3 (SCAR3) from Arabidopsis thaliana (Mouse-ear cress).